Reading from the N-terminus, the 332-residue chain is tRNA U34 carboxymethyltransferase (332 aa).

Residues Lys-91, Trp-105, Lys-110, Gly-130, 152-154 (DPS), 181-182 (IE), Met-196, Tyr-200, and Arg-315 each bind carboxy-S-adenosyl-L-methionine.

Belongs to the class I-like SAM-binding methyltransferase superfamily. CmoB family. Homotetramer.

It carries out the reaction carboxy-S-adenosyl-L-methionine + 5-hydroxyuridine(34) in tRNA = 5-carboxymethoxyuridine(34) in tRNA + S-adenosyl-L-homocysteine + H(+). Functionally, catalyzes carboxymethyl transfer from carboxy-S-adenosyl-L-methionine (Cx-SAM) to 5-hydroxyuridine (ho5U) to form 5-carboxymethoxyuridine (cmo5U) at position 34 in tRNAs. This is tRNA U34 carboxymethyltransferase from Shewanella sp. (strain W3-18-1).